The chain runs to 843 residues: Receptor-like serine/threonine-protein kinase SD1-7 (843 aa).

Residues Met1–Ser31 form the signal peptide. Residues Ala32–Asp151 enclose the Bulb-type lectin domain. The Extracellular portion of the chain corresponds to Ala32–Lys435. Asn41, Asn92, Asn116, Asn236, and Asn251 each carry an N-linked (GlcNAc...) asparagine glycan. Positions Pro286–Gln322 constitute an EGF-like; atypical domain. Intrachain disulfides connect Cys290-Cys302, Cys296-Cys310, Cys372-Cys397, and Cys376-Cys382. Positions Cys341–Ala422 constitute a PAN domain. A glycan (N-linked (GlcNAc...) asparagine) is linked at Asn381. A helical transmembrane segment spans residues Ile436 to Phe456. Residues Trp457 to Arg843 are Cytoplasmic-facing. The 291-residue stretch at Phe519–Phe809 folds into the Protein kinase domain. ATP contacts are provided by residues Leu525–Val533 and Lys547. Ser553 carries the post-translational modification Phosphoserine. The segment at Thr608–Ile625 is caM-binding. Asp644 acts as the Proton acceptor in catalysis. Phosphoserine occurs at positions 648 and 661. Thr678 carries the phosphothreonine modification. A Phosphoserine modification is found at Ser820.

It belongs to the protein kinase superfamily. Ser/Thr protein kinase family. As to quaternary structure, interacts with PUB9, PUB13, PUB14 and PUB38. Autophosphorylated on serine and threonine residues. Mostly expressed in leaves, and, to a lower extent, in stems and flower buds.

It localises to the cell membrane. It carries out the reaction L-seryl-[protein] + ATP = O-phospho-L-seryl-[protein] + ADP + H(+). It catalyses the reaction L-threonyl-[protein] + ATP = O-phospho-L-threonyl-[protein] + ADP + H(+). Functionally, involved in the regulation of cellular expansion and differentiation. Mediates subcellular relocalization of PUB9 from nucleus to plasma membrane in a protein-phosphorylation-dependent manner. May be involved in the abscisic acid-mediated signaling pathway, at least during germination. This Arabidopsis thaliana (Mouse-ear cress) protein is Receptor-like serine/threonine-protein kinase SD1-7 (SD17).